A 393-amino-acid polypeptide reads, in one-letter code: Protein FAM53C (393 aa).

Met1 is subject to N-acetylmethionine. Residues 77-120 are disordered; the sequence is HLRPPSRGNSPKEPPLSQVLSPEPPDPEKLPVPPAPPSKRHCRS. Ser122 and Ser162 each carry phosphoserine. 2 disordered regions span residues 141-167 and 204-283; these read LWTP…PKRV and QPCA…ARKT. A compositionally biased stretch (polar residues) spans 204–215; it reads QPCATSPQSGSW. 5 positions are modified to phosphoserine: Ser232, Ser234, Ser255, Ser273, and Ser299. Residues 241-256 are compositionally biased toward low complexity; the sequence is ASRFLPSARSSPASSP. Low complexity predominate over residues 343-355; sequence SCSPVEGSSQVLS. The interval 343–365 is disordered; it reads SCSPVEGSSQVLSESEEEEEGSV.

Belongs to the FAM53 family.

The polypeptide is Protein FAM53C (Mus musculus (Mouse)).